The primary structure comprises 346 residues: tRNA pseudouridine synthase D (346 aa).

Residue Asp81 is the Nucleophile of the active site. One can recognise a TRUD domain in the interval 157 to 303 (GVPNYFGLQR…MKHERRILRL (147 aa)).

It belongs to the pseudouridine synthase TruD family.

The enzyme catalyses uridine(13) in tRNA = pseudouridine(13) in tRNA. In terms of biological role, responsible for synthesis of pseudouridine from uracil-13 in transfer RNAs. The polypeptide is tRNA pseudouridine synthase D (Stutzerimonas stutzeri (strain A1501) (Pseudomonas stutzeri)).